The following is a 327-amino-acid chain: MKEISGIKVKVESGSKYTTDHGFHAVKDGIRNKKENAVHVRKPDWLKVQKQDSKEYLKVKSITKKHKLSTVCEEARCPNINECWSHGTATIMLMGSVCTRACKFCSVDTGNPKGWLDKDEPMNAAESVKLMGLEYVVLTSVDRDDLEDGGAGHYAATITAIKNLDENIKVEALTPDFAGINENIDKIINTKVDVIAQNIETVERLTHPVRDPRAGYWQTLNFLKYVKQKSPNVLTKTSIMVGLGETDEEIYKTMDDARSVGIDIITLGQYMQPTKHHLSVERFVTPQQFEEYRKVGLEKGFLEVASGPMVRSSYRADRVFKRNNLDL.

7 residues coordinate [4Fe-4S] cluster: cysteine 72, cysteine 77, cysteine 83, cysteine 98, cysteine 102, cysteine 105, and serine 313. The region spanning 83–302 (CWSHGTATIM…RKVGLEKGFL (220 aa)) is the Radical SAM core domain.

It belongs to the radical SAM superfamily. Lipoyl synthase family. It depends on [4Fe-4S] cluster as a cofactor.

The protein resides in the cytoplasm. It carries out the reaction [[Fe-S] cluster scaffold protein carrying a second [4Fe-4S](2+) cluster] + N(6)-octanoyl-L-lysyl-[protein] + 2 oxidized [2Fe-2S]-[ferredoxin] + 2 S-adenosyl-L-methionine + 4 H(+) = [[Fe-S] cluster scaffold protein] + N(6)-[(R)-dihydrolipoyl]-L-lysyl-[protein] + 4 Fe(3+) + 2 hydrogen sulfide + 2 5'-deoxyadenosine + 2 L-methionine + 2 reduced [2Fe-2S]-[ferredoxin]. It functions in the pathway protein modification; protein lipoylation via endogenous pathway; protein N(6)-(lipoyl)lysine from octanoyl-[acyl-carrier-protein]: step 2/2. Functionally, catalyzes the radical-mediated insertion of two sulfur atoms into the C-6 and C-8 positions of the octanoyl moiety bound to the lipoyl domains of lipoate-dependent enzymes, thereby converting the octanoylated domains into lipoylated derivatives. The chain is Lipoyl synthase from Francisella tularensis subsp. mediasiatica (strain FSC147).